A 643-amino-acid polypeptide reads, in one-letter code: Carboxy-terminal kinesin 2 (643 aa).

Disordered regions lie at residues 1-42 (MDST…SSLE) and 81-101 (MRPKNSGPGITSTSFSGKTKV). The segment at 1-116 (MDSTDKKVQV…QPAAIGAEKK (116 aa)) is globular. The segment covering 88-101 (PGITSTSFSGKTKV) has biased composition (polar residues). Positions 117–296 (KRAAWDLKGQ…LVQELKGNIR (180 aa)) form a coiled coil. Residues 294-633 (NIRVFCRVRP…LRFASKVNEC (340 aa)) enclose the Kinesin motor domain. An ATP-binding site is contributed by 386 to 393 (GQTGSGKT).

The protein belongs to the TRAFAC class myosin-kinesin ATPase superfamily. Kinesin family. NCD subfamily.

Its subcellular location is the cytoplasm. It is found in the cytoskeleton. In terms of biological role, promotes mitotic spindle assembly. The polypeptide is Carboxy-terminal kinesin 2 (Xenopus laevis (African clawed frog)).